Consider the following 148-residue polypeptide: Small ribosomal subunit protein bS6 (148 aa).

The segment at 96–148 is disordered; it reads HEEGQSAMLTRRDDRRERDGDDRPRRREGGFDRGDRGDRGPRRPRDTEAGEGA.

It belongs to the bacterial ribosomal protein bS6 family.

Binds together with bS18 to 16S ribosomal RNA. This chain is Small ribosomal subunit protein bS6, found in Brucella canis (strain ATCC 23365 / NCTC 10854 / RM-666).